The following is a 509-amino-acid chain: MQMDAVVILLILAFPIASVYVLFYHKKRVDGLSEPPGPPGLPFIGNFYQLYKAPCIHEYLCTLSKRYGSLMTLRMGSVPILVVSSPKMAKEVLKTQDLAYCSRPMMTGMQKLSYNGLDVAFSPYSEHWRQVRKFCTLELFTQKRAQIDFRHVHEQEVSRMIARLSETAAASKDVNAFECFSNLATSIISRVAFGKRHDEDGIGKERLQRMLSELDTMLSVYFVSDFFPMFGWIDSLTGMRARLDRTFKEMDMFYEELIDDHLKPDRPESLTEDIIDVMLKNKGCSSSSLTKDTMKAILLNVFNGGTGTSASLLVWAMTALMRNRGVMKKVQEEIRSVIGKKGNVDEDDIQNLPYLRAVVKETMRLYPTGALLIPRKTIESSIIGEDKDHMYMIKPKTLVYVSMWAIGRDPEIWKNPMKFVPERFLERHDINYQGQQFEYIPFGAGRRICPGIHLGLTTVELALANLLYTFNWEPPVGTRFEDINDETVNGITLQKKNALYIRPKTYMFS.

A helical membrane pass occupies residues 5–25; the sequence is AVVILLILAFPIASVYVLFYH. A substrate specificity region spans residues 368-373; the sequence is TGALLI. Residue Cys449 coordinates heme.

It belongs to the cytochrome P450 family. Requires heme as cofactor.

The protein localises to the microsome membrane. The catalysed reaction is xanthotoxin + reduced [NADPH--hemoprotein reductase] + O2 = 5-hydroxyxanthotoxin + oxidized [NADPH--hemoprotein reductase] + H2O + 2 H(+). It functions in the pathway secondary metabolite biosynthesis. In terms of biological role, involved in the biosynthesis of coumarins and furanocoumarins (FCs), natural products required for defense responses against attacks by predators with potential medical and agroindustrial usages such as anticoagulant, rodenticide and artificial vanilla substitutes. Catalyzes the conversion of xanthotoxin into 5-hydroxyxanthotoxin. The chain is 5-OH-xanthotoxin synthase from Ammi majus (Bishop's weed).